We begin with the raw amino-acid sequence, 243 residues long: Large ribosomal subunit protein uL2 (243 aa).

The tract at residues 198-243 (VDHPFGGGGRQHPGKPKSVSRDTPPGRKVGDIASKRTGRGGKGGQE) is disordered. Basic and acidic residues predominate over residues 221 to 231 (PPGRKVGDIAS).

Belongs to the universal ribosomal protein uL2 family. In terms of assembly, part of the 50S ribosomal subunit. Forms a bridge to the 30S subunit in the 70S ribosome.

Its function is as follows. One of the primary rRNA binding proteins. Required for association of the 30S and 50S subunits to form the 70S ribosome, for tRNA binding and peptide bond formation. It has been suggested to have peptidyltransferase activity; this is somewhat controversial. Makes several contacts with the 16S rRNA in the 70S ribosome. The protein is Large ribosomal subunit protein uL2 of Natronomonas pharaonis (strain ATCC 35678 / DSM 2160 / CIP 103997 / JCM 8858 / NBRC 14720 / NCIMB 2260 / Gabara) (Halobacterium pharaonis).